Consider the following 681-residue polypeptide: Methionine--tRNA ligase (681 aa).

A 'HIGH' region motif is present at residues P12–H22. The Zn(2+) site is built by C143, C146, C156, and C159. The short motif at K327–S331 is the 'KMSKS' region element. K330 contributes to the ATP binding site. The span at F545–P557 shows a compositional bias: basic and acidic residues. The segment at F545–K566 is disordered. Residues E580–K681 form the tRNA-binding domain.

This sequence belongs to the class-I aminoacyl-tRNA synthetase family. MetG type 1 subfamily. In terms of assembly, homodimer. Zn(2+) serves as cofactor.

The protein resides in the cytoplasm. It catalyses the reaction tRNA(Met) + L-methionine + ATP = L-methionyl-tRNA(Met) + AMP + diphosphate. In terms of biological role, is required not only for elongation of protein synthesis but also for the initiation of all mRNA translation through initiator tRNA(fMet) aminoacylation. The protein is Methionine--tRNA ligase of Leptospira biflexa serovar Patoc (strain Patoc 1 / ATCC 23582 / Paris).